A 169-amino-acid polypeptide reads, in one-letter code: Probable phospholipid hydroperoxide glutathione peroxidase (169 aa).

Residue cysteine 43 is part of the active site.

Belongs to the glutathione peroxidase family. Monomer. Has a tendency to form higher mass oligomers. Interacts with FUNDC1; this interaction promotes GPX4 recruitment into mitochondria through TOM/TIM complex where it is degraded by mitophagy.

It is found in the cytoplasm. The catalysed reaction is a hydroperoxy polyunsaturated fatty acid + 2 glutathione = a hydroxy polyunsaturated fatty acid + glutathione disulfide + H2O. In terms of biological role, protects cells and enzymes from oxidative damage, by catalyzing the reduction of hydrogen peroxide, lipid peroxides and organic hydroperoxide, by glutathione. This is Probable phospholipid hydroperoxide glutathione peroxidase (GPXle-1) from Solanum lycopersicum (Tomato).